The sequence spans 462 residues: Tryptophan dimethylallyltransferase ifgA (462 aa).

L-tryptophan contacts are provided by residues Ile-83–Leu-84 and Glu-92. Arg-103, Lys-189, and Tyr-191 together coordinate substrate. Positions 193 and 246 each coordinate L-tryptophan. The substrate site is built by Arg-259, Lys-261, Tyr-263, Gln-345, and Tyr-347.

It belongs to the tryptophan dimethylallyltransferase family. As to quaternary structure, homodimer.

The catalysed reaction is L-tryptophan + dimethylallyl diphosphate = 4-(3-methylbut-2-enyl)-L-tryptophan + diphosphate. Its pathway is alkaloid biosynthesis; ergot alkaloid biosynthesis. In terms of biological role, tryptophan dimethylallyltransferase; part of the gene cluster that mediates the biosynthesis of isofumigaclavines, fungal ergot alkaloids. The tryptophan dimethylallyltransferase ifgA catalyzes the first step of ergot alkaloid biosynthesis by condensing dimethylallyl diphosphate (DMAP) and tryptophan to form 4-dimethylallyl-L-tryptophan. The second step is catalyzed by the methyltransferase ifgB that methylates 4-dimethylallyl-L-tryptophan in the presence of S-adenosyl-L-methionine, resulting in the formation of N-methyl-dimethylallyl-L-tryptophan. The catalase ifgD and the FAD-dependent oxidoreductase ifgC then transform N-methyl-dimethylallyl-L-tryptophan to chanoclavine-I which is further oxidized by ifgE in the presence of NAD(+), resulting in the formation of chanoclavine-I aldehyde. The chanoclavine-I aldehyde reductases ifgG and/or fgaOx3 reduce chanoclavine-I aldehyde to dihydrochanoclavine-I aldehyde that spontaneously dehydrates to form 6,8-dimethyl-6,7-didehydroergoline. The festuclavine dehydrogenases ifgF1 and/or ifgF2 then catalyze the reduction of 6,8-dimethyl-6,7-didehydroergoline to form festuclavine. Hydrolysis of festuclavine by a yet undetermined cytochrome P450 monooxygenase (called ifgH) then leads to the formation of isofumigaclavine B which is in turn acetylated by ifgI to isofumigaclavine A. Penicillium roqueforti has interestingly at least two sets of genes for the consumption of chanoclavine-I aldehyde on three different loci, the OYEs ifgG/fgaOx3 and the festuclavine synthase homologs ifgF1/ifgF2. The reason for the duplication of these genes is unclear, probably to ensure the conversion of chanoclavine-I aldehyde by differential gene expression under various environmental conditions. The polypeptide is Tryptophan dimethylallyltransferase ifgA (Penicillium roqueforti (strain FM164)).